The following is a 310-amino-acid chain: Methionyl-tRNA formyltransferase (310 aa).

(6S)-5,6,7,8-tetrahydrofolate is bound at residue 109-112 (SLLP).

It belongs to the Fmt family.

The enzyme catalyses L-methionyl-tRNA(fMet) + (6R)-10-formyltetrahydrofolate = N-formyl-L-methionyl-tRNA(fMet) + (6S)-5,6,7,8-tetrahydrofolate + H(+). Attaches a formyl group to the free amino group of methionyl-tRNA(fMet). The formyl group appears to play a dual role in the initiator identity of N-formylmethionyl-tRNA by promoting its recognition by IF2 and preventing the misappropriation of this tRNA by the elongation apparatus. The protein is Methionyl-tRNA formyltransferase of Pseudomonas entomophila (strain L48).